A 445-amino-acid polypeptide reads, in one-letter code: MEFTASPKPQLSSRANAFSIAALMSSGGPKEKEAAENTIKPLEQFVEKSSCAQPLGELTSLDAHAEFGGGGGSPSSSSLCTEPLIPTTPIIPSEEMAKIACSLETKELWDKFHELGTEMIITKSGRRMFPTIRVSFSGVDPESKYIVLMDIVPVDNKRYRYAYHRSSWLVAGKADPPLPARLYVHPDSPFTGEQLLKQMVSFEKVKLTNNELDQHGHIILNSMHKYQPRVHIIKKKDHTASLLNLKSEEFRTFIFPETVFTAVTAYQNQLITKLKIDSNPFAKGFRDSSRLTDIERESVESLIQKHSYARSPIRTYGEEDVLGEESQTTQSRGSAFTTSDNLSLSSWVSSSSSFPGFQHPQPLTALGTSTASIATPIPHPIQGSLPPYSRLGMPLTPSAIASSMQGSGPTFPSFHMPRYHHYFQQGPYAAIQGLRHSSAVMTPFV.

A DNA-binding region (T-box) is located at residues leucine 108–aspartate 287. A disordered region spans residues glutamate 318 to threonine 337. The segment covering glutamate 325–threonine 337 has biased composition (polar residues).

In terms of tissue distribution, prominently expressed in the extraembryonic mesoderm, developing heart, eye analage and motor neurons of hindbrain and spinal cord. Expressed in extraembryonic tissues such as the amnion and allantois.

The protein resides in the nucleus. Functionally, acts as a transcriptional activator and repressor required for cardiac development and may have key roles in the maintenance of functional and structural phenotypes in adult heart. The protein is T-box transcription factor TBX20 (Tbx20) of Mus musculus (Mouse).